Reading from the N-terminus, the 202-residue chain is Na(+)-translocating NADH-quinone reductase subunit E (202 aa).

Helical transmembrane passes span 4–24 (LAGL…FFLG), 35–55 (IEVA…TVPI), 81–101 (FLGL…LEMF), 114–134 (GIYL…LFMV), 144–164 (LVYG…LAGV), and 180–200 (LGIT…FSGI).

Belongs to the NqrDE/RnfAE family. Composed of six subunits; NqrA, NqrB, NqrC, NqrD, NqrE and NqrF.

Its subcellular location is the cell inner membrane. It catalyses the reaction a ubiquinone + n Na(+)(in) + NADH + H(+) = a ubiquinol + n Na(+)(out) + NAD(+). Functionally, NQR complex catalyzes the reduction of ubiquinone-1 to ubiquinol by two successive reactions, coupled with the transport of Na(+) ions from the cytoplasm to the periplasm. NqrA to NqrE are probably involved in the second step, the conversion of ubisemiquinone to ubiquinol. This Nitrosomonas europaea (strain ATCC 19718 / CIP 103999 / KCTC 2705 / NBRC 14298) protein is Na(+)-translocating NADH-quinone reductase subunit E.